The following is a 413-amino-acid chain: 1-deoxy-D-xylulose 5-phosphate reductoisomerase (413 aa).

Positions 21, 22, 23, 24, 47, and 127 each coordinate NADPH. Lys128 contacts 1-deoxy-D-xylulose 5-phosphate. Glu129 provides a ligand contact to NADPH. A Mn(2+)-binding site is contributed by Asp151. Residues Ser152, Glu153, Ser177, and His200 each contribute to the 1-deoxy-D-xylulose 5-phosphate site. Glu153 contributes to the Mn(2+) binding site. Gly206 contacts NADPH. 1-deoxy-D-xylulose 5-phosphate contacts are provided by Ser213, Asn218, Lys219, and Glu222. Glu222 is a binding site for Mn(2+).

This sequence belongs to the DXR family. Requires Mg(2+) as cofactor. Mn(2+) serves as cofactor.

It catalyses the reaction 2-C-methyl-D-erythritol 4-phosphate + NADP(+) = 1-deoxy-D-xylulose 5-phosphate + NADPH + H(+). The protein operates within isoprenoid biosynthesis; isopentenyl diphosphate biosynthesis via DXP pathway; isopentenyl diphosphate from 1-deoxy-D-xylulose 5-phosphate: step 1/6. Its function is as follows. Catalyzes the NADPH-dependent rearrangement and reduction of 1-deoxy-D-xylulose-5-phosphate (DXP) to 2-C-methyl-D-erythritol 4-phosphate (MEP). This Mycobacterium bovis (strain ATCC BAA-935 / AF2122/97) protein is 1-deoxy-D-xylulose 5-phosphate reductoisomerase.